A 427-amino-acid polypeptide reads, in one-letter code: MATSWGAVFMLIIACVGSTVFYREQQTWFEGVFLSSMCPINVSAGTFYGIMFDAGSTGTRIHVYTFVQKTAGQLPFLEGEIFDSVKPGLSAFVDQPKQGAETVQELLEVAKDSIPRSHWERTPVVLKATAGLRLLPEQKAQALLLEVEEIFKNSPFLVPDGSVSIMDGSYEGILAWVTVNFLTGQLHGRGQETVGTLDLGGASTQITFLPQFEKTLEQTPRGYLTSFEMFNSTFKLYTHSYLGFGLKAARLATLGALEAKGTDGHTFRSACLPRWLEAEWIFGGVKYQYGGNQEGEMGFEPCYAEVLRVVQGKLHQPEEVRGSAFYAFSYYYDRAADTHLIDYEKGGVLKVEDFERKAREVCDNLGSFSSGSPFLCMDLTYITALLKDGFGFADGTLLQLTKKVNNIETGWALGATFHLLQSLGITS.

Residues 1–24 (MATSWGAVFMLIIACVGSTVFYRE) form the signal peptide. Residue glutamate 171 is the Proton acceptor of the active site. A glycan (N-linked (GlcNAc...) asparagine) is linked at asparagine 231. 2 cysteine pairs are disulfide-bonded: cysteine 271–cysteine 302 and cysteine 362–cysteine 376.

The protein belongs to the GDA1/CD39 NTPase family. Monomer; active form. Homodimer; disulfide-linked. Homodimers are enzymatically inactive. The cofactor is Ca(2+). Mg(2+) is required as a cofactor. N-glycosylated; high-mannose type. Ubiquitous.

It localises to the endoplasmic reticulum. The protein resides in the secreted. The enzyme catalyses a ribonucleoside 5'-diphosphate + H2O = a ribonucleoside 5'-phosphate + phosphate + H(+). It catalyses the reaction GDP + H2O = GMP + phosphate + H(+). It carries out the reaction UDP + H2O = UMP + phosphate + H(+). The catalysed reaction is IDP + H2O = IMP + phosphate + H(+). The enzyme catalyses CDP + H2O = CMP + phosphate + H(+). It catalyses the reaction ADP + H2O = AMP + phosphate + H(+). The protein operates within protein modification; protein glycosylation. Functionally, hydrolyzes nucleoside diphosphates with a preference for GDP, IDP and UDP compared to ADP and CDP. In the lumen of the endoplasmic reticulum, hydrolyzes UDP that acts as an end-product feedback inhibitor of the UDP-Glc:glycoprotein glucosyltransferases. UMP can be transported back by an UDP-sugar antiporter to the cytosol where it is consumed to regenerate UDP-glucose. Therefore, it positively regulates protein reglucosylation by clearing UDP from the ER lumen and by promoting the regeneration of UDP-glucose. Protein reglucosylation is essential to proper glycoprotein folding and quality control in the ER. This is Ectonucleoside triphosphate diphosphohydrolase 5 (Entpd5) from Mus musculus (Mouse).